The following is a 337-amino-acid chain: Monoacylglycerol lipase ABHD6 (337 aa).

At 1–8 (MDLDVVNM) the chain is on the extracellular side. A helical; Signal-anchor for type II membrane protein membrane pass occupies residues 9-29 (FVIAGGTLAIPILAFVASFLL). Residues 30–337 (WPSALIRIYY…HNPDNNKKLN (308 aa)) are Cytoplasmic-facing. Ser148 acts as the Nucleophile in catalysis. Residues Asp278 and His306 each act as charge relay system in the active site.

Belongs to the AB hydrolase superfamily.

The protein localises to the late endosome membrane. The protein resides in the lysosome membrane. Its subcellular location is the mitochondrion membrane. The enzyme catalyses Hydrolyzes glycerol monoesters of long-chain fatty acids.. It carries out the reaction 1-octanoylglycerol + H2O = octanoate + glycerol + H(+). It catalyses the reaction 1-decanoylglycerol + H2O = decanoate + glycerol + H(+). The catalysed reaction is 1-dodecanoylglycerol + H2O = dodecanoate + glycerol + H(+). The enzyme catalyses 1-tetradecanoylglycerol + H2O = tetradecanoate + glycerol + H(+). It carries out the reaction 2-hexadecanoylglycerol + H2O = glycerol + hexadecanoate + H(+). It catalyses the reaction 2-(9Z-octadecenoyl)-glycerol + H2O = glycerol + (9Z)-octadecenoate + H(+). The catalysed reaction is 1-(9Z-octadecenoyl)-glycerol + H2O = glycerol + (9Z)-octadecenoate + H(+). The enzyme catalyses 2-(9Z,12Z-octadecadienoyl)-glycerol + H2O = (9Z,12Z)-octadecadienoate + glycerol + H(+). It carries out the reaction 2-(5Z,8Z,11Z,14Z-eicosatetraenoyl)-glycerol + H2O = glycerol + (5Z,8Z,11Z,14Z)-eicosatetraenoate + H(+). It catalyses the reaction 1-(5Z,8Z,11Z,14Z-eicosatetraenoyl)-glycerol + H2O = glycerol + (5Z,8Z,11Z,14Z)-eicosatetraenoate + H(+). The catalysed reaction is 1-(9Z,12Z-octadecadienoyl)-glycerol + H2O = (9Z,12Z)-octadecadienoate + glycerol + H(+). The enzyme catalyses 3-(9Z-octadecenoyl)-sn-glycero-1-phospho-(3'-(9Z-octadecenoyl)-1'-sn-glycerol) + H2O = 3-(9Z-octadecenoyl)-sn-glycero-1-phospho-(1'-sn-glycerol) + (9Z)-octadecenoate + H(+). It carries out the reaction (S,S)-2-(9Z-octadecenoyl)-sn-glycero-1-phospho-(2'-(9Z-octadecenoyl)-1'-sn-glycerol) + H2O = (S,S)-2-(9Z-octadecenoyl)-sn-glycero-1-phospho-(1'-sn-glycerol) + (9Z)-octadecenoate + H(+). It catalyses the reaction (R,R)-2-(9Z-octadecenoyl)-sn-glycero-3-phospho-(2'-(9Z-octadecenoyl)-3'-sn-glycerol) + H2O = (R,R)-2-(9Z-octadecenoyl)-sn-glycero-3-phospho-(3'-sn-glycerol) + (9Z)-octadecenoate + H(+). In terms of biological role, lipase that preferentially hydrolysis medium-chain saturated monoacylglycerols including 2-arachidonoylglycerol. Through 2-arachidonoylglycerol degradation may regulate endocannabinoid signaling pathways. Also has a lysophosphatidyl lipase activity with a preference for lysophosphatidylglycerol among other lysophospholipids. Also able to degrade bis(monoacylglycero)phosphate (BMP) and constitutes the major enzyme for BMP catabolism. BMP, also known as lysobisphosphatidic acid, is enriched in late endosomes and lysosomes and plays a key role in the formation of intraluminal vesicles and in lipid sorting. In Rattus norvegicus (Rat), this protein is Monoacylglycerol lipase ABHD6.